We begin with the raw amino-acid sequence, 195 residues long: Large ribosomal subunit protein uL18 (195 aa).

The protein belongs to the universal ribosomal protein uL18 family. In terms of assembly, part of the 50S ribosomal subunit. Contacts the 5S and 23S rRNAs.

Its function is as follows. This is one of the proteins that bind and probably mediate the attachment of the 5S RNA into the large ribosomal subunit, where it forms part of the central protuberance. The polypeptide is Large ribosomal subunit protein uL18 (Methanococcus vannielii).